Here is a 129-residue protein sequence, read N- to C-terminus: uncharacterized protein (129 aa).

Positions 84–98 (QKTVSKKYKSRKGRR) are enriched in basic residues. The segment at 84–129 (QKTVSKKYKSRKGRRYTRERNISSEKNKTDKSHKVRVGKIQNINND) is disordered. Positions 99 to 115 (YTRERNISSEKNKTDKS) are enriched in basic and acidic residues.

This is an uncharacterized protein from Acanthamoeba polyphaga mimivirus (APMV).